We begin with the raw amino-acid sequence, 170 residues long: NADH-quinone oxidoreductase subunit B (170 aa).

Residues Cys-37, Cys-38, Cys-102, and Cys-131 each contribute to the [4Fe-4S] cluster site.

The protein belongs to the complex I 20 kDa subunit family. In terms of assembly, NDH-1 is composed of 14 different subunits. Subunits NuoB, C, D, E, F, and G constitute the peripheral sector of the complex. The cofactor is [4Fe-4S] cluster.

Its subcellular location is the cell inner membrane. It carries out the reaction a quinone + NADH + 5 H(+)(in) = a quinol + NAD(+) + 4 H(+)(out). Functionally, NDH-1 shuttles electrons from NADH, via FMN and iron-sulfur (Fe-S) centers, to quinones in the respiratory chain. The immediate electron acceptor for the enzyme in this species is believed to be ubiquinone. Couples the redox reaction to proton translocation (for every two electrons transferred, four hydrogen ions are translocated across the cytoplasmic membrane), and thus conserves the redox energy in a proton gradient. In Geotalea uraniireducens (strain Rf4) (Geobacter uraniireducens), this protein is NADH-quinone oxidoreductase subunit B.